A 216-amino-acid polypeptide reads, in one-letter code: Large ribosomal subunit protein uL24m (216 aa).

The N-terminal 9 residues, 1–9 (MRLSALLAL), are a transit peptide targeting the mitochondrion. Position 24 is a phosphoserine (serine 24). Positions 56–89 (LFCGDMVEILEGKDAGKQGKVVQVVRQRNWVVLE) constitute a KOW domain.

Belongs to the universal ribosomal protein uL24 family. As to quaternary structure, component of the mitochondrial ribosome large subunit (39S) which comprises a 16S rRNA and about 50 distinct proteins.

It localises to the mitochondrion. This is Large ribosomal subunit protein uL24m (Mrpl24) from Mus musculus (Mouse).